The following is a 177-amino-acid chain: ADP-ribosylation factor-like protein 17 (177 aa).

G2 is lipidated: N-myristoyl glycine. Residues 24 to 31, 67 to 71, and 125 to 128 contribute to the GTP site; these read SLDTAGKT, DVGSH, and LPHS.

The protein belongs to the small GTPase superfamily. Arf family.

It is found in the golgi apparatus. Its function is as follows. GTP-binding protein that functions as an allosteric activator of the cholera toxin catalytic subunit, an ADP-ribosyltransferase. Involved in protein trafficking; may modulate vesicle budding and uncoating within the Golgi apparatus. The sequence is that of ADP-ribosylation factor-like protein 17 (ARL17A) from Homo sapiens (Human).